Reading from the N-terminus, the 130-residue chain is Small ribosomal subunit protein uS9 (130 aa).

Belongs to the universal ribosomal protein uS9 family.

In Bacillus velezensis (strain DSM 23117 / BGSC 10A6 / LMG 26770 / FZB42) (Bacillus amyloliquefaciens subsp. plantarum), this protein is Small ribosomal subunit protein uS9.